We begin with the raw amino-acid sequence, 126 residues long: Holo-[acyl-carrier-protein] synthase (126 aa).

Mg(2+)-binding residues include Asp9 and Glu58.

It belongs to the P-Pant transferase superfamily. AcpS family. Mg(2+) is required as a cofactor.

It localises to the cytoplasm. The enzyme catalyses apo-[ACP] + CoA = holo-[ACP] + adenosine 3',5'-bisphosphate + H(+). Functionally, transfers the 4'-phosphopantetheine moiety from coenzyme A to a Ser of acyl-carrier-protein. The sequence is that of Holo-[acyl-carrier-protein] synthase from Photobacterium profundum (strain SS9).